A 128-amino-acid chain; its full sequence is Protein C10 (128 aa).

Belongs to the UPF0456 family.

It is found in the cytoplasm. In Xenopus tropicalis (Western clawed frog), this protein is Protein C10.